The following is an 83-amino-acid chain: Cytochrome b559 subunit alpha (83 aa).

The chain crosses the membrane as a helical span at residues 21–35; the sequence is VIHSITIPSLFIAGW. H23 contacts heme.

Belongs to the PsbE/PsbF family. As to quaternary structure, heterodimer of an alpha subunit and a beta subunit. PSII is composed of 1 copy each of membrane proteins PsbA, PsbB, PsbC, PsbD, PsbE, PsbF, PsbH, PsbI, PsbJ, PsbK, PsbL, PsbM, PsbT, PsbX, PsbY, PsbZ, Psb30/Ycf12, at least 3 peripheral proteins of the oxygen-evolving complex and a large number of cofactors. It forms dimeric complexes. Requires heme b as cofactor.

The protein localises to the plastid. Its subcellular location is the chloroplast thylakoid membrane. In terms of biological role, this b-type cytochrome is tightly associated with the reaction center of photosystem II (PSII). PSII is a light-driven water:plastoquinone oxidoreductase that uses light energy to abstract electrons from H(2)O, generating O(2) and a proton gradient subsequently used for ATP formation. It consists of a core antenna complex that captures photons, and an electron transfer chain that converts photonic excitation into a charge separation. This chain is Cytochrome b559 subunit alpha, found in Adiantum capillus-veneris (Maidenhair fern).